A 348-amino-acid chain; its full sequence is Anthranilate phosphoribosyltransferase (348 aa).

5-phospho-alpha-D-ribose 1-diphosphate-binding positions include G89, 92–93 (GD), T97, 99–102 (NIST), 117–125 (KHGNRSVSS), and S129. Anthranilate is bound at residue G89. S101 contributes to the Mg(2+) binding site. An anthranilate-binding site is contributed by N120. Anthranilate is bound at residue R175. Positions 233 and 234 each coordinate Mg(2+).

Belongs to the anthranilate phosphoribosyltransferase family. In terms of assembly, homodimer. Mg(2+) is required as a cofactor.

The enzyme catalyses N-(5-phospho-beta-D-ribosyl)anthranilate + diphosphate = 5-phospho-alpha-D-ribose 1-diphosphate + anthranilate. It functions in the pathway amino-acid biosynthesis; L-tryptophan biosynthesis; L-tryptophan from chorismate: step 2/5. Functionally, catalyzes the transfer of the phosphoribosyl group of 5-phosphorylribose-1-pyrophosphate (PRPP) to anthranilate to yield N-(5'-phosphoribosyl)-anthranilate (PRA). The chain is Anthranilate phosphoribosyltransferase from Shewanella putrefaciens (strain CN-32 / ATCC BAA-453).